A 350-amino-acid chain; its full sequence is ADP-ribosylhydrolase ARH3 (350 aa).

The Mg(2+) site is built by E27, T57, D58, and D59. D58 contacts substrate. Substrate is bound by residues 127–133 (KGSYGNG), H163, L216, and I252. Mg(2+) contacts are provided by D295, D297, and T298.

This sequence belongs to the ADP-ribosylglycohydrolase family. In terms of assembly, monomer. The cofactor is Mg(2+).

It localises to the nucleus. The protein localises to the cytoplasm. Its subcellular location is the chromosome. It is found in the mitochondrion matrix. It carries out the reaction [(1''-&gt;2')-ADP-alpha-D-ribose](n) + H2O = [(1''-&gt;2')-ADP-alpha-D-ribose](n-1) + ADP-D-ribose. It catalyses the reaction 1''-O-acetyl-ADP-alpha-D-ribose + H2O = ADP-D-ribose + acetate + H(+). The catalysed reaction is O-(ADP-D-ribosyl)-L-seryl-[protein] + H2O = ADP-D-ribose + L-seryl-[protein]. The enzyme catalyses alpha-NAD(+) + H2O = ADP-D-ribose + nicotinamide + H(+). The protein undergoes a dramatic conformational switch from closed to open states upon substrate-binding, which enables specific substrate recognition for the 1''-O-linkage. The glutamate flap (Glu-27) blocks substrate entrance to Mg(2+) in the unliganded closed state. In presence of substrate, Glu-27 is ejected from the active site: this closed-to-open transition significantly widens the substrate-binding channel and precisely positions the scissile 1''-O-linkage for cleavage while securing tightly 2'- and 3'-hydroxyls of ADP-ribose. In terms of biological role, ADP-ribosylhydrolase that preferentially hydrolyzes the scissile alpha-O-linkage attached to the anomeric C1'' position of ADP-ribose and acts on different substrates, such as proteins ADP-ribosylated on serine and threonine, free poly(ADP-ribose) and O-acetyl-ADP-D-ribose. Specifically acts as a serine mono-ADP-ribosylhydrolase by mediating the removal of mono-ADP-ribose attached to serine residues on proteins, thereby playing a key role in DNA damage response. Serine ADP-ribosylation of proteins constitutes the primary form of ADP-ribosylation of proteins in response to DNA damage. Does not hydrolyze ADP-ribosyl-arginine, -cysteine, -diphthamide, or -asparagine bonds. Also able to degrade protein free poly(ADP-ribose), which is synthesized in response to DNA damage: free poly(ADP-ribose) acts as a potent cell death signal and its degradation by ADPRHL2 protects cells from poly(ADP-ribose)-dependent cell death, a process named parthanatos. Also hydrolyzes free poly(ADP-ribose) in mitochondria. Specifically digests O-acetyl-ADP-D-ribose, a product of deacetylation reactions catalyzed by sirtuins. Specifically degrades 1''-O-acetyl-ADP-D-ribose isomer, rather than 2''-O-acetyl-ADP-D-ribose or 3''-O-acetyl-ADP-D-ribose isomers. The chain is ADP-ribosylhydrolase ARH3 (adprs) from Xenopus tropicalis (Western clawed frog).